Reading from the N-terminus, the 207-residue chain is 2,3-bisphosphoglycerate-dependent phosphoglycerate mutase (207 aa).

Residues R9–N16, T22–G23, R61, E88–Y91, K99, R115–R116, and G159–N160 each bind substrate. H10 serves as the catalytic Tele-phosphohistidine intermediate. E88 (proton donor/acceptor) is an active-site residue.

The protein belongs to the phosphoglycerate mutase family. BPG-dependent PGAM subfamily. As to quaternary structure, homodimer.

It carries out the reaction (2R)-2-phosphoglycerate = (2R)-3-phosphoglycerate. Its pathway is carbohydrate degradation; glycolysis; pyruvate from D-glyceraldehyde 3-phosphate: step 3/5. Catalyzes the interconversion of 2-phosphoglycerate and 3-phosphoglycerate. The chain is 2,3-bisphosphoglycerate-dependent phosphoglycerate mutase from Beijerinckia indica subsp. indica (strain ATCC 9039 / DSM 1715 / NCIMB 8712).